A 179-amino-acid polypeptide reads, in one-letter code: Large ribosomal subunit protein uL5 (179 aa).

The protein belongs to the universal ribosomal protein uL5 family. In terms of assembly, part of the 50S ribosomal subunit; part of the 5S rRNA/L5/L18/L25 subcomplex. Contacts the 5S rRNA and the P site tRNA. Forms a bridge to the 30S subunit in the 70S ribosome.

This is one of the proteins that bind and probably mediate the attachment of the 5S RNA into the large ribosomal subunit, where it forms part of the central protuberance. In the 70S ribosome it contacts protein S13 of the 30S subunit (bridge B1b), connecting the 2 subunits; this bridge is implicated in subunit movement. Contacts the P site tRNA; the 5S rRNA and some of its associated proteins might help stabilize positioning of ribosome-bound tRNAs. This Exiguobacterium sp. (strain ATCC BAA-1283 / AT1b) protein is Large ribosomal subunit protein uL5.